The following is a 542-amino-acid chain: TNF receptor-associated factor 6 (542 aa).

An interaction with TAX1BP1 region spans residues 1-374 (MSLLHCENSC…EAQQCNGIYI (374 aa)). The segment at 71-110 (CPICLMALREAVQTPCGHRFCKACIIKSIRDAGHKCPVDN) adopts an RING-type; degenerate zinc-finger fold. Residue K125 forms a Glycyl lysine isopeptide (Lys-Gly) (interchain with G-Cter in SUMO); alternate linkage. K125 is covalently cross-linked (Glycyl lysine isopeptide (Lys-Gly) (interchain with G-Cter in ubiquitin); alternate). A Glycyl lysine isopeptide (Lys-Gly) (interchain with G-Cter in SUMO) cross-link involves residue K143. 2 consecutive TRAF-type zinc fingers follow at residues 151 to 203 (EHQA…EDKE) and 204 to 260 (IHEQ…NHLA). The stretch at 310-368 (SEVHNFQETIQQLEGRLVRQDHQIRELTAKMETQSMYVNELKRTIRTLEDKVAEIEAQQ) forms a coiled coil. K339 is covalently cross-linked (Glycyl lysine isopeptide (Lys-Gly) (interchain with G-Cter in ubiquitin)). The region spanning 370-519 (NGIYIWKIGN…DDTLLVRCEV (150 aa)) is the MATH domain. An interaction with TANK region spans residues 375–542 (WKIGNFGMHL…FQPRSTDSGI (168 aa)). K473 is covalently cross-linked (Glycyl lysine isopeptide (Lys-Gly) (interchain with G-Cter in SUMO)).

This sequence belongs to the TNF receptor-associated factor family. A subfamily. Homotrimer. Homooligomer. N-terminal region is dimeric while C-terminal region is trimeric; maybe providing a mode of oligomerization. Upon IL1B treatment, forms a complex with PELI1, IRAK1, IRAK4 and MYD88; this complex recruits MAP3K7/TAK1, TAB1 and TAB2 to mediate NF-kappa-B activation. Direct binding of SMAD6 to PELI1 prevents the complex formation and hence negatively regulates IL1R-TLR signaling and eventually NF-kappa-B-mediated gene expression. Binds to TNFRSF5/CD40 and TNFRSF11A/RANK. Associates with NGFR, TNFRSF17, IRAK2, IRAK3, RIPK2, MAP3K1, MAP3K5, MAP3K14, CSK, TRAF, TRAF-interacting protein TRIP and TNF receptor associated protein TDP2. Interacts with IL17R. Interacts with SQSTM1 bridging NTRK1 and NGFR. Forms a ternary complex with SQSTM1 and PRKCZ. Interacts with PELI2 and PELI3. Binds UBE2V1. Interacts with TAX1BP1; this interaction mediates deubiquitination of TRAF6 and inhibition of NF-kappa-B activation. Interacts with ZNF675. Interacts with ARRB1 and ARRB2. Interacts with MAP3K7 and TAB1/MAP3K7IP1; during IL-1 signaling. Interacts with UBE2N. Interacts with TGFBR1, HDAC1 and RANGAP1. Interacts with AKT1, AKT2 and AKT3. Interacts (via TRAF domains) with NUMBL (via C-terminal). Interacts with RBCK1. Interacts with LIMD1 (via LIM domains). Interacts with RSAD2/viperin. Interacts (via C-terminus) with EIF2AK2/PKR (via the kinase catalytic domain). Interacts with ZFAND5. Interacts with IL1RL1. Interacts with TRAFD1. Interacts with AJUBA. Interacts with MAVS/IPS1. Interacts (via TRAF domains) with DYNC2I2 (via WD domains). Interacts with IFIT3 (via N-terminus). Interacts with TICAM2. Interacts with CARD14. Interacts with CD40 and MAP3K8; the interaction is required for ERK activation. Interacts with TICAM1 and this interaction is enhanced in the presence of WDFY1. Interacts with TANK; this interaction increases in response to DNA damage. Interacts with USP10; this interaction increases in response to DNA damage. Interacts with ZC3H12A; this interaction increases in response to DNA damage and is stimulated by TANK. Interacts with WDFY3. Interacts with TRIM13. Interacts with GPS2. Interacts (via C-terminus) with SASH1. Interacts with LRRC19. Interacts with IL17RA and TRAF3IP2. Interacts with TOMM70. Interacts with AMBRA1; interaction is required to mediate 'Lys-63'-linked ubiquitination of ULK1. Interacts with CRBN; this interaction inhibits TLR4-mediated signaling by preventing TRAF6-mediated ubiquitination of ECSIT. Sumoylated on Lys-125, Lys-143 and Lys-473 with SUMO1. Post-translationally, polyubiquitinated on Lys-125 by TRAF3IP2; after cell stimulation with IL17A. Polyubiquitinated on Lys-125; after cell stimulation with IL1B or TGFB. This ligand-induced cell stimulation leads to dimerization/oligomerization of TRAF6 molecules, followed by auto-ubiquitination which involves UBE2N and UBE2V1 and leads to TRAF6 activation. This 'Lys-63' site-specific poly-ubiquitination appears to be associated with the activation of signaling molecules. Endogenous autoubiquitination occurs only for the cytoplasmic form. Deubiquitinated by USP10 in a TANK-dependent manner, leading to the negative regulation of NF-kappa-B signaling upon DNA damage. LRRC19 induces 'Lys-63' ubiquitination. Ubiquitinated at Lys-339 by the SCF(FBXL2) complex, leading to its degradation by the proteasome.

It localises to the cytoplasm. The protein localises to the cell cortex. It is found in the nucleus. Its subcellular location is the lipid droplet. The enzyme catalyses S-ubiquitinyl-[E2 ubiquitin-conjugating enzyme]-L-cysteine + [acceptor protein]-L-lysine = [E2 ubiquitin-conjugating enzyme]-L-cysteine + N(6)-ubiquitinyl-[acceptor protein]-L-lysine.. The protein operates within protein modification; protein ubiquitination. Functionally, E3 ubiquitin ligase that, together with UBE2N and UBE2V1, mediates the synthesis of 'Lys-63'-linked-polyubiquitin chains conjugated to proteins, such as ECSIT, IKBKG, IRAK1, AKT1 and AKT2. Also mediates ubiquitination of free/unanchored polyubiquitin chain that leads to MAP3K7 activation. Leads to the activation of NF-kappa-B and JUN. Seems to also play a role in dendritic cells (DCs) maturation and/or activation. Represses c-Myb-mediated transactivation, in B-lymphocytes. Adapter protein that seems to play a role in signal transduction initiated via TNF receptor, IL-1 receptor and IL-17 receptor. Regulates osteoclast differentiation by mediating the activation of adapter protein complex 1 (AP-1) and NF-kappa-B, in response to RANK-L stimulation. Together with MAP3K8, mediates CD40 signals that activate ERK in B-cells and macrophages, and thus may play a role in the regulation of immunoglobulin production. Acts as a regulator of the JNK and NF-kappa-B signaling pathways by initiating assembly of heterotypic 'Lys-63'-/'Lys-48'-linked branched ubiquitin chains that are then recognized by TAB2: TRAF6 catalyzes initial 'Lys-63'-linked-polyubiquitin chains that are then branched via 'Lys-48'-linked polyubiquitin by HUWE1. 'Lys-63'-/'Lys-48'-linked branched ubiquitin chains protect 'Lys-63'-linkages from CYLD deubiquitination. Also participates in the TCR signaling by ubiquitinating LAT. The chain is TNF receptor-associated factor 6 (TRAF6) from Bos taurus (Bovine).